The sequence spans 394 residues: Elongation factor Tu (394 aa).

A tr-type G domain is found at 10-204; sequence KPHVNVGTIG…HLDTYIPEPE (195 aa). Residues 19–26 form a G1 region; that stretch reads GHVDHGKT. 19–26 provides a ligand contact to GTP; the sequence is GHVDHGKT. Mg(2+) is bound at residue T26. A G2 region spans residues 60–64; sequence GITIN. Positions 81–84 are G3; the sequence is DCPG. GTP is bound by residues 81–85 and 136–139; these read DCPGH and NKCD. A G4 region spans residues 136-139; that stretch reads NKCD. The G5 stretch occupies residues 174–176; sequence SAL.

Belongs to the TRAFAC class translation factor GTPase superfamily. Classic translation factor GTPase family. EF-Tu/EF-1A subfamily. Monomer.

It localises to the cytoplasm. The catalysed reaction is GTP + H2O = GDP + phosphate + H(+). Its function is as follows. GTP hydrolase that promotes the GTP-dependent binding of aminoacyl-tRNA to the A-site of ribosomes during protein biosynthesis. The chain is Elongation factor Tu from Actinobacillus pleuropneumoniae serotype 5b (strain L20).